A 219-amino-acid polypeptide reads, in one-letter code: MGQKINPLGFRLGTTQGHHSLWFAQPKNYSEGLQEDQKIRDFIKNYVQKNMKISSSVEGIARIEIQKRIDLIQVIIYMGFPKLLIESRPRGIEELQMNLQKEFKSVNQKLNIAITRIAKPYGSPNILAEFIAGQLKNRVSFRKAMKKAIELTEQADTKGIQVQIAGRIDGKEIARVEWIREGRVPLQTIRAKIDYCSYTVRTIYGVLGIKIWIFIDGEE.

The KH type-2 domain occupies 43–118 (IKNYVQKNMK…KLNIAITRIA (76 aa)).

The protein belongs to the universal ribosomal protein uS3 family. In terms of assembly, part of the 30S ribosomal subunit.

The protein localises to the plastid. It is found in the chloroplast. The protein is Small ribosomal subunit protein uS3c (rps3) of Panax ginseng (Korean ginseng).